The chain runs to 414 residues: Arrestin domain-containing protein 3 (414 aa).

2 short sequence motifs (PPxY motif) span residues 346–349 and 391–394; these read PPSY and PPLY. Positions 393–414 are disordered; it reads LYSEIDPNPDQPADDRPSCPSR. Residues 405–414 are compositionally biased toward basic and acidic residues; it reads ADDRPSCPSR.

This sequence belongs to the arrestin family. Interacts (via PPxY motifs) with NEDD4 (via WW domains). Interacts with ADRB2. Interacts with ADRB3. Interacts with HGS (via PPxY motifs). Does not bind TXN (thioredoxin). Interacts with ITCH.

Its subcellular location is the cytoplasm. It is found in the cell membrane. It localises to the lysosome. The protein resides in the endosome. The protein localises to the early endosome. Adapter protein that plays a role in regulating cell-surface expression of adrenergic receptors and probably also other G protein-coupled receptors. Plays a role in NEDD4-mediated ubiquitination and endocytosis af activated ADRB2 and subsequent ADRB2 degradation. May recruit NEDD4 to ADRB2. Alternatively, may function as adapter protein that does not play a major role in recruiting NEDD4 to ADRB2, but rather plays a role in a targeting ADRB2 to endosomes. The polypeptide is Arrestin domain-containing protein 3 (ARRDC3) (Bos taurus (Bovine)).